A 232-amino-acid polypeptide reads, in one-letter code: BTB/POZ domain-containing protein KCTD11 (232 aa).

Residues 1–49 enclose the BTB domain; that stretch reads MLGAMFRADTLMPANLNPQGDGHYFIDRDGKAFRHILNFLRLGRLDLPR.

Homopentamer. Interacts with KCTD6 and KCTD21; KCTD11 and KCTD6 or KCTD21 may associate in pentameric assemblies. Component of the BCR(KCTD11) E3 ubiquitin ligase complex, at least composed of CUL3 and KCTD11 and RBX1. Interacts (via BTB domain) with CUL3; initially a 4:4 stoichiometry has been reported, however, electron microscopy revealed pentameric states of the BTB domain. As to expression, weakly expressed in lung. In the cerebellum, higher expression in non proliferating external granule cells layer than in highly proliferating ones.

It participates in protein modification; protein ubiquitination. Functionally, plays a role as a marker and a regulator of neuronal differentiation; Up-regulated by a variety of neurogenic signals, such as retinoic acid, epidermal growth factor/EGF and NGFB/nerve growth factor. Induces apoptosis, growth arrest and the expression of cyclin-dependent kinase inhibitor CDKN1B. Plays a role as a tumor repressor and inhibits cell growth and tumorigenicity of medulloblastoma (MDB). Acts as a probable substrate-specific adapter for a BCR (BTB-CUL3-RBX1) E3 ubiquitin-protein ligase complex towards HDAC1. Functions as antagonist of the Hedgehog pathway on cell proliferation and differentiation by affecting the nuclear transfer of transcription factor GLI1, thus maintaining cerebellar granule cells in undifferentiated state, this effect probably occurs via HDAC1 down-regulation, keeping GLI1 acetylated and inactive. When knock-down, Hedgehog antagonism is impaired and proliferation of granule cells is sustained. Activates the caspase cascade. This Mus musculus (Mouse) protein is BTB/POZ domain-containing protein KCTD11 (Kctd11).